We begin with the raw amino-acid sequence, 396 residues long: Phosphoglycerate kinase (396 aa).

Residues 21–23 (DFN), arginine 36, 59–62 (HFDR), arginine 118, and arginine 151 contribute to the substrate site. Residues lysine 201, glutamate 323, and 353–356 (GGDT) each bind ATP.

The protein belongs to the phosphoglycerate kinase family. In terms of assembly, monomer.

The protein localises to the cytoplasm. It carries out the reaction (2R)-3-phosphoglycerate + ATP = (2R)-3-phospho-glyceroyl phosphate + ADP. It functions in the pathway carbohydrate degradation; glycolysis; pyruvate from D-glyceraldehyde 3-phosphate: step 2/5. This chain is Phosphoglycerate kinase, found in Caulobacter vibrioides (strain ATCC 19089 / CIP 103742 / CB 15) (Caulobacter crescentus).